We begin with the raw amino-acid sequence, 30 residues long: Thrombin-like enzyme LmrSP-2 (30 aa).

Belongs to the peptidase S1 family. Snake venom subfamily. Expressed by the venom gland.

Its subcellular location is the secreted. Thrombin-like snake venom serine protease that cleaves alpha-chain of fibrinogen (FGA) releases only fibrinopeptide A. Shows coagulant, esterase and amidase activities. The protein is Thrombin-like enzyme LmrSP-2 of Lachesis muta rhombeata (Bushmaster).